Consider the following 403-residue polypeptide: Aurora kinase A (403 aa).

The interval 1-125 (MDRSKENCIS…SKQKNEESKK (125 aa)) is disordered. 2 stretches are compositionally biased toward polar residues: residues 27 to 83 (VTQQ…QATS) and 91 to 101 (PLNNTQKSKQP). Phosphoserine is present on residues Ser-41 and Ser-51. Residues 114–125 (LASKQKNEESKK) show a composition bias toward basic and acidic residues. A Protein kinase domain is found at 133–383 (FEIGRPLGKG…LREVLEHPWI (251 aa)). Residues Lys-143, Lys-162, and 211–213 (EYA) contribute to the ATP site. The active-site Proton acceptor is Asp-256. Lys-258 is covalently cross-linked (Glycyl lysine isopeptide (Lys-Gly) (interchain with G-Cter in SUMO2)). Residues 260–261 (EN) and Asp-274 contribute to the ATP site. The activation segment stretch occupies residues 280–293 (HAPSSRRTTLCGTL). Phosphothreonine is present on residues Thr-287 and Thr-288. Phosphoserine; by PKA and PAK is present on Ser-342.

It belongs to the protein kinase superfamily. Ser/Thr protein kinase family. Aurora subfamily. Part of a complex composed of NEDD9, AURKA and CTTN; within the complex NEDD9 acts as a scaffold protein and is required for complex formation. Identified in a complex with AUNIP and NIN. Interacts with FBXL7. Interacts with CPEB1, JTB, TACC1, TPX2, PPP2CA, as well as with the protein phosphatase type 1 (PP1) isoforms PPP1CA, PPP1CB and PPP1CC. Also interacts with its substrates ARHGEF2, BORA, KIF2A, PARD3, and p53/TP53. Interaction with BORA promotes phosphorylation of PLK1. Interacts with CIMAP3. Interacts with GADD45A, competing with its oligomerization. Interacts (via C-terminus) with AUNIP (via C-terminus). Interacts with FRY; this interaction facilitates AURKA-mediated PLK1 phosphorylation. Interacts with SIRT2. Interacts with MYCN; interaction is phospho-independent and triggers AURKA activation; AURKA competes with FBXW7 for binding to unphosphorylated MYCN but not for binding to phosphorylated MYCN. Interacts with HNRNPU. Interacts with AAAS. Interacts with KLHL18 and CUL3. Interacts with FOXP1. Interacts with HDAC6; AURKA-mediated phosphorylation of HDAC6 promotes deacetylation of alpha-tubulin. Activated by phosphorylation at Thr-288; this brings about a change in the conformation of the activation segment. Phosphorylation at Thr-288 varies during the cell cycle and is highest during M phase. Autophosphorylated at Thr-288 upon TPX2 binding. Thr-288 can be phosphorylated by several kinases, including PAK and PKA. Protein phosphatase type 1 (PP1) binds AURKA and inhibits its activity by dephosphorylating Thr-288 during mitosis. Phosphorylation at Ser-342 decreases the kinase activity. PPP2CA controls degradation by dephosphorylating Ser-51 at the end of mitosis. In terms of processing, ubiquitinated by the E3 ubiquitin-protein ligase complex SCF(FBXL7) during mitosis, leading to its degradation by the proteasome. Ubiquitinated by CHFR, leading to its degradation by the proteasome. Ubiquitinated by the anaphase-promoting complex (APC), leading to its degradation by the proteasome. Ubiquitinated by the CUL3-KLHL18 ligase leading to its activation at the centrosome which is required for initiating mitotic entry. Ubiquitination mediated by CUL3-KLHL18 ligase does not lead to its degradation by the proteasome. As to expression, highly expressed in testis and weakly in skeletal muscle, thymus and spleen. Also highly expressed in colon, ovarian, prostate, neuroblastoma, breast and cervical cancer cell lines.

Its subcellular location is the cytoplasm. It is found in the cytoskeleton. The protein resides in the microtubule organizing center. The protein localises to the centrosome. It localises to the spindle pole. Its subcellular location is the centriole. It is found in the cell projection. The protein resides in the neuron projection. The protein localises to the cilium. It localises to the cilium basal body. Its subcellular location is the basolateral cell membrane. The catalysed reaction is L-seryl-[protein] + ATP = O-phospho-L-seryl-[protein] + ADP + H(+). It carries out the reaction L-threonyl-[protein] + ATP = O-phospho-L-threonyl-[protein] + ADP + H(+). With respect to regulation, activation of CDK1, appears to be an upstream event of AURKA activation. Phosphatase inhibitor-2 (PPP1R2) and TPX2 act also as activators. Inactivated by the G2 checkpoint. Inhibited by GADD45A and p53/TP53, and through dephosphorylation by protein phosphatase type 1 (PP1). MLN8054 is also a potent and selective inhibitor. Activated during the early phase of cilia disassembly in the presence of CIMAP3. Inhibited by the small molecule inhibitor VX-680. In terms of biological role, mitotic serine/threonine kinase that contributes to the regulation of cell cycle progression. Associates with the centrosome and the spindle microtubules during mitosis and plays a critical role in various mitotic events including the establishment of mitotic spindle, centrosome duplication, centrosome separation as well as maturation, chromosomal alignment, spindle assembly checkpoint, and cytokinesis. Required for normal spindle positioning during mitosis and for the localization of NUMA1 and DCTN1 to the cell cortex during metaphase. Required for initial activation of CDK1 at centrosomes. Phosphorylates numerous target proteins, including ARHGEF2, BORA, BRCA1, CDC25B, DLGP5, HDAC6, KIF2A, LATS2, NDEL1, PARD3, PPP1R2, PLK1, RASSF1, TACC3, p53/TP53 and TPX2. Phosphorylates MCRS1 which is required for MCRS1-mediated kinetochore fiber assembly and mitotic progression. Regulates KIF2A tubulin depolymerase activity. Important for microtubule formation and/or stabilization. Required for normal axon formation. Plays a role in microtubule remodeling during neurite extension. Also acts as a key regulatory component of the p53/TP53 pathway, and particularly the checkpoint-response pathways critical for oncogenic transformation of cells, by phosphorylating and destabilizing p53/TP53. Phosphorylates its own inhibitors, the protein phosphatase type 1 (PP1) isoforms, to inhibit their activity. Inhibits cilia outgrowth. Required for cilia disassembly via phosphorylation of HDAC6 and subsequent deacetylation of alpha-tubulin. Regulates protein levels of the anti-apoptosis protein BIRC5 by suppressing the expression of the SCF(FBXL7) E3 ubiquitin-protein ligase substrate adapter FBXL7 through the phosphorylation of the transcription factor FOXP1. The polypeptide is Aurora kinase A (Homo sapiens (Human)).